Here is a 555-residue protein sequence, read N- to C-terminus: MARVEL domain-containing protein 2 (555 aa).

Over residues 1 to 20 (MSSSDARSRIRDRGYSEVPR) the composition is skewed to basic and acidic residues. A disordered region spans residues 1 to 71 (MSSSDARSRI…FYSSDTEEPA (71 aa)). Over 1–191 (MSSSDARSRI…YMKSWAGLLR (191 aa)) the chain is Cytoplasmic. Residues 46 to 59 (PLPPPPLPLQPPFG) are compositionally biased toward pro residues. A phosphoserine mark is found at serine 117, serine 121, and serine 158. Positions 118–142 (PPASPARANHHPYKDPSRGSQGTFN) are disordered. Position 163 is a phosphothreonine (threonine 163). Residues 185-364 (SWAGLLRILG…SALVCLKLWR (180 aa)) form the MARVEL domain. A helical membrane pass occupies residues 192–212 (ILGVVELLLGAGVFACVTAYI). Residues 213–251 (HKDNEWYNLFGYTQPYGMGGLGSLGNTYGGYYYSGPKTP) lie on the Extracellular side of the membrane. A helical membrane pass occupies residues 252–272 (FVLVVAGLAWITTIIILVLGM). At 273–288 (SMYYRTILLDSNWWPL) the chain is on the cytoplasmic side. A helical transmembrane segment spans residues 289-309 (TEFGVNVALFILYMAAAIVYV). Residues 310 to 338 (NDTNRGGLCYYPLFNTPMNAMFCRVEGGQ) lie on the Extracellular side of the membrane. Residues 339–359 (IAAMIFLFVTMIVYLVSALVC) form a helical membrane-spanning segment. Residues 360 to 555 (LKLWRHEAAR…VMNWDTQGYP (196 aa)) are Cytoplasmic-facing. The residue at position 384 (serine 384) is a Phosphoserine. Residue lysine 408 forms a Glycyl lysine isopeptide (Lys-Gly) (interchain with G-Cter in ubiquitin) linkage. The region spanning 437–548 (PDYVAKYPVI…RIQEYDKVMN (112 aa)) is the OCEL domain. A coiled-coil region spans residues 521–545 (EKKERCDYLKNKLSHIKQRIQEYDK).

It belongs to the ELL/occludin family. As to quaternary structure, interacts with TJP1. Interacts with the ubiquitin ligase ITCH. Interacts (via C-terminal cytoplasmic domain) with LSR (via the cytoplasmic domain), ILDR1 and ILDR2; the interaction is required to recruit MARVELD2 to tricellular contacts. Post-translationally, ubiquitinated by ITCH; but this ubiquitination does not lead to proteasomal degradation. Polyubiquitinated at Lys-408 via 'Lys-63'-linked ubiquitin chains; deubiquitinated by USP53. In terms of processing, phosphorylated. In terms of tissue distribution, detected in small intestine, stomach and kidney, in epithelial cells. Detected in pancreas, retina and lung, and in stria vascularis, utricle and the organ of Conti in the inner ear (at protein level). Predominantly detected in small intestine, lung and kidney, with lower levels in liver, testis and brain. In colon, expressed in the entire crypts.

The protein localises to the cell membrane. It is found in the cell junction. Its subcellular location is the tight junction. Functionally, plays a role in the formation of tricellular tight junctions and of epithelial barriers. Required for normal hearing via its role in the separation of the endolymphatic and perilymphatic spaces of the organ of Corti in the inner ear, and for normal survival of hair cells in the organ of Corti. This is MARVEL domain-containing protein 2 from Mus musculus (Mouse).